The primary structure comprises 324 residues: Zinc finger C2HC domain-containing protein 1A (324 aa).

The C2HC/C3H-type 1 zinc finger occupies 15 to 44; the sequence is DLLPCKICGRTFFPLALKKHGPICQKTATK. Zn(2+) contacts are provided by Cys19, Cys22, His34, and Cys38. The segment at 43–83 is disordered; sequence TKKRKTFDSSRQRAEGTDIPTVKPLKPRPEPPKKPSNWRRK. The segment covering 48-58 has biased composition (basic and acidic residues); it reads TFDSSRQRAEG. The segment at 118–147 adopts a C2HC/C3H-type 2 zinc-finger fold; that stretch reads DYIQCPYCQRRFNENAADRHINFCKEQAAR. Positions 122, 125, 137, and 141 each coordinate Zn(2+). Positions 149–225 are disordered; sequence SNKGKFSTDS…NKPQTLSPSH (77 aa). The span at 176-187 shows a compositional bias: low complexity; it reads SNPPGIPSSGSS. Polar residues-rich tracts occupy residues 188-198 and 206-223; these read RLPQPSTTSKT and KASS…TLSP. Ser222 is subject to Phosphoserine. The residue at position 243 (Thr243) is a Phosphothreonine. Position 291 is a phosphoserine (Ser291).

Belongs to the ZC2HC1 family. Zn(2+) serves as cofactor.

The polypeptide is Zinc finger C2HC domain-containing protein 1A (Zc2hc1a) (Mus musculus (Mouse)).